Consider the following 222-residue polypeptide: Glutathione S-transferase (222 aa).

Residues Gly3–Gly83 enclose the GST N-terminal domain. Glutathione-binding positions include Tyr9, Arg45, Gln54 to Val55, and Gln67 to Ser68. In terms of domain architecture, GST C-terminal spans Asp85 to Leu208.

The protein belongs to the GST superfamily. Alpha family. Homodimer.

The protein resides in the cytoplasm. The catalysed reaction is RX + glutathione = an S-substituted glutathione + a halide anion + H(+). Functionally, conjugation of reduced glutathione to a wide number of exogenous and endogenous hydrophobic electrophiles. This Gallus gallus (Chicken) protein is Glutathione S-transferase.